A 522-amino-acid polypeptide reads, in one-letter code: Amine oxidase [flavin-containing] (522 aa).

The Cytoplasmic portion of the chain corresponds to 1–492 (MTANAYDVIV…WERNLPSVGG (492 aa)). Cys398 carries the post-translational modification S-8alpha-FAD cysteine. A helical; Anchor for type IV membrane protein transmembrane segment spans residues 493-513 (FLKFMGVSSFLAAATAAGLVA). Over 514–522 (CKKGLLPRC) the chain is Mitochondrial intermembrane.

It belongs to the flavin monoamine oxidase family. In terms of assembly, monomer, homo- or heterodimer (containing two subunits of similar size). Each subunit contains a covalently bound flavin. Enzymatically active as monomer. FAD serves as cofactor. As to expression, strongest expression in brain and intestine, followed by liver, heart and gill. Little expression in spleen, eye or muscle. In brain, highest activity in noradrenergic and serotonergic cell groups and those of the habenulointerpeduncular pathway; moderate levels in dopaminergic cell clusters.

It localises to the mitochondrion outer membrane. It carries out the reaction a secondary aliphatic amine + O2 + H2O = a primary amine + an aldehyde + H2O2. The enzyme catalyses a primary methyl amine + O2 + H2O = an aldehyde + H2O2 + NH4(+). It catalyses the reaction serotonin + O2 + H2O = (5-hydroxyindol-3-yl)acetaldehyde + H2O2 + NH4(+). The catalysed reaction is 2-phenylethylamine + O2 + H2O = 2-phenylacetaldehyde + H2O2 + NH4(+). It carries out the reaction tyramine + O2 + H2O = (4-hydroxyphenyl)acetaldehyde + H2O2 + NH4(+). The enzyme catalyses dopamine + O2 + H2O = 3,4-dihydroxyphenylacetaldehyde + H2O2 + NH4(+). It catalyses the reaction (R)-adrenaline + O2 + H2O = (R)-3,4-dihydroxymandelaldehyde + methylamine + H2O2. The catalysed reaction is (R)-noradrenaline + O2 + H2O = (R)-3,4-dihydroxymandelaldehyde + H2O2 + NH4(+). It carries out the reaction kynuramine + O2 + H2O = 3-(2-aminophenyl)-3-oxopropanal + H2O2 + NH4(+). The enzyme catalyses tryptamine + O2 + H2O = indole-3-acetaldehyde + H2O2 + NH4(+). Inhibited by both clorgyline (selective MAOA inhibitor) and deprenyl (selective MAOB inhibitor). In terms of biological role, catalyzes the oxidative deamination of biogenic and xenobiotic amines and has important functions in the metabolism of neuroactive and vasoactive amines in the central nervous system and peripheral tissues. Preferentially oxidizes serotonin and tyramine. Also catalyzes the oxidative deamination of kynuramine to 3-(2-aminophenyl)-3-oxopropanal that can spontaneously condense to 4-hydroxyquinoline. The chain is Amine oxidase [flavin-containing] from Danio rerio (Zebrafish).